The primary structure comprises 517 residues: Sphingolipid C9-methyltransferase A (517 aa).

Helical transmembrane passes span 58–78 (LLILLLVVIPWYTARQIGGGL) and 80–100 (TTIFFAIFTTIPILMAFWSIA). Residues 223-224 (YT), 286-291 (TLGRNQ), and 316-317 (YR) contribute to the S-adenosyl-L-methionine site. Residue Asn290 is glycosylated (N-linked (GlcNAc...) asparagine). A glycan (N-linked (GlcNAc...) asparagine) is linked at Asn478.

Belongs to the CFA/CMAS family.

The protein localises to the membrane. The enzyme catalyses a (4E,8E)-4-sphinga-4,8-dienine ceramide + S-adenosyl-L-methionine = a 9-methyl-(4E,8E)-sphinga-4,8-dienine ceramide + S-adenosyl-L-homocysteine + H(+). It functions in the pathway lipid metabolism; sphingolipid metabolism. Its function is as follows. Catalyzes methylation of the sphingoid base component of glucosylceramides (GluCers) at the C9-position. Sphingolipid C9-methylation requires 4,8-desaturated ceramides as substrates. Glucosylceramides play important roles in growth, differentiation and pathogenicity. The methyl group at the C9-position distinguishes fungal glucosylceramides from those of plants and animals and may thus play a role in host-pathogen interactions enabling the host to recognize the fungal attack and initiate specific defense responses. In Emericella nidulans (strain FGSC A4 / ATCC 38163 / CBS 112.46 / NRRL 194 / M139) (Aspergillus nidulans), this protein is Sphingolipid C9-methyltransferase A.